The chain runs to 157 residues: ATP synthase subunit b' (157 aa).

The chain crosses the membrane as a helical span at residues 22–42 (ATLPLIAIQFLLLVAVLNSLF).

It belongs to the ATPase B chain family. In terms of assembly, F-type ATPases have 2 components, F(1) - the catalytic core - and F(0) - the membrane proton channel. F(1) has five subunits: alpha(3), beta(3), gamma(1), delta(1), epsilon(1). F(0) has four main subunits: a(1), b(1), b'(1) and c(10-14). The alpha and beta chains form an alternating ring which encloses part of the gamma chain. F(1) is attached to F(0) by a central stalk formed by the gamma and epsilon chains, while a peripheral stalk is formed by the delta, b and b' chains.

Its subcellular location is the cellular thylakoid membrane. In terms of biological role, f(1)F(0) ATP synthase produces ATP from ADP in the presence of a proton or sodium gradient. F-type ATPases consist of two structural domains, F(1) containing the extramembraneous catalytic core and F(0) containing the membrane proton channel, linked together by a central stalk and a peripheral stalk. During catalysis, ATP synthesis in the catalytic domain of F(1) is coupled via a rotary mechanism of the central stalk subunits to proton translocation. Functionally, component of the F(0) channel, it forms part of the peripheral stalk, linking F(1) to F(0). The b'-subunit is a diverged and duplicated form of b found in plants and photosynthetic bacteria. The chain is ATP synthase subunit b' from Synechococcus sp. (strain JA-2-3B'a(2-13)) (Cyanobacteria bacterium Yellowstone B-Prime).